An 89-amino-acid polypeptide reads, in one-letter code: Small ribosomal subunit protein uS15 (89 aa).

This sequence belongs to the universal ribosomal protein uS15 family. In terms of assembly, part of the 30S ribosomal subunit. Forms a bridge to the 50S subunit in the 70S ribosome, contacting the 23S rRNA.

Functionally, one of the primary rRNA binding proteins, it binds directly to 16S rRNA where it helps nucleate assembly of the platform of the 30S subunit by binding and bridging several RNA helices of the 16S rRNA. Its function is as follows. Forms an intersubunit bridge (bridge B4) with the 23S rRNA of the 50S subunit in the ribosome. The polypeptide is Small ribosomal subunit protein uS15 (Prochlorococcus marinus (strain MIT 9312)).